The following is an 866-amino-acid chain: FHIP family protein v1g243165 (866 aa).

Disordered stretches follow at residues 739-761 (RDGP…ASTS) and 781-814 (GSTA…ESQT). Over residues 751-761 (SIGSIGSASTS) the composition is skewed to low complexity.

This sequence belongs to the FHIP family.

This Nematostella vectensis (Starlet sea anemone) protein is FHIP family protein v1g243165.